Reading from the N-terminus, the 546-residue chain is Probable malate:quinone oxidoreductase (546 aa).

Belongs to the MQO family. FAD serves as cofactor.

It catalyses the reaction (S)-malate + a quinone = a quinol + oxaloacetate. It functions in the pathway carbohydrate metabolism; tricarboxylic acid cycle; oxaloacetate from (S)-malate (quinone route): step 1/1. This Acinetobacter baumannii (strain ACICU) protein is Probable malate:quinone oxidoreductase.